The primary structure comprises 120 residues: Large ribosomal subunit protein bL21 (120 aa).

This sequence belongs to the bacterial ribosomal protein bL21 family. In terms of assembly, part of the 50S ribosomal subunit. Contacts protein L20.

Functionally, this protein binds to 23S rRNA in the presence of protein L20. The sequence is that of Large ribosomal subunit protein bL21 from Rhizorhabdus wittichii (strain DSM 6014 / CCUG 31198 / JCM 15750 / NBRC 105917 / EY 4224 / RW1) (Sphingomonas wittichii).